Reading from the N-terminus, the 495-residue chain is Neuronal acetylcholine receptor subunit alpha-3 (495 aa).

The signal sequence occupies residues 1–21 (MARRSRLRRLLLLLLLPVAST). Over 22 to 240 (SDAEHRLFER…PLFYTINLII (219 aa)) the chain is Extracellular. 2 N-linked (GlcNAc...) asparagine glycosylation sites follow: Asn-45 and Asn-162. Intrachain disulfides connect Cys-149/Cys-163 and Cys-213/Cys-214. A helical transmembrane segment spans residues 241–256 (PCLLISFLTVLVFYLP). The Cytoplasmic portion of the chain corresponds to 257–258 (SD). The helical transmembrane segment at 259–275 (CGEKVTLCISVLLSLTV) threads the bilayer. Glu-261 provides a ligand contact to Na(+). Residues 276–297 (FLLVITETIPSTSLVIPLIGEY) lie on the Extracellular side of the membrane. A helical membrane pass occupies residues 298–316 (LLFTMIFVTLSIVITVFVL). The Cytoplasmic portion of the chain corresponds to 317–464 (NVHYRTPTTH…QDDWKYVAMV (148 aa)). Phosphoserine is present on residues Ser-403 and Ser-406. A helical transmembrane segment spans residues 465-483 (IDRIFLWVFILVCILGTAG). Residues 484-495 (LFLQPLMTRDDA) are Extracellular-facing.

It belongs to the ligand-gated ion channel (TC 1.A.9) family. Acetylcholine receptor (TC 1.A.9.1) subfamily. Alpha-3/CHRNA3 sub-subfamily. As to quaternary structure, neuronal AChR is composed of two different types of subunits: alpha and beta. CHRNA3/Alpha-3 subunit can be combined to CHRNB2/beta-2 or CHRNB4/beta-4 to give rise to functional receptors. Part of a complex composed of STUB1/CHIP, VCP/p97, CHRNA3, and UBXN2A that modulates the ubiquitination and endoplasmic reticulum-associated degradation (ERAD) of CHRNA3. Within the complex UBXN2A acts as a scaffold protein required for the interaction of CHRNA3 with VCP/p97, this interaction also inhibits CHRNA3 ubiquitination by STUB1/CHIP and subsequently ERAD. Interacts with UBXN2A (via SEP domain), the interaction is required for the interaction of CHRNA3 in the STUB1:VCP:UBXN2A complex. Interacts with RIC3; which is required for proper folding and assembly. Interacts with LYPD6. In terms of processing, ubiquitinated; by STUB1/CHIP and thereafter degraded by the 26S proteosome complex.

The protein resides in the synaptic cell membrane. Its subcellular location is the cell membrane. It localises to the endoplasmic reticulum. It is found in the golgi apparatus. The catalysed reaction is K(+)(in) = K(+)(out). It carries out the reaction Na(+)(in) = Na(+)(out). It catalyses the reaction Ca(2+)(in) = Ca(2+)(out). Activated by a myriad of ligands such as acetylcholine, cytisine, nicotine, choline and epibatidine. The heteropentamer CHRNA3:CHRNB2 activity is blocked by alpha-conotoxins ImI, ImII, PnIA, GID and MII. The heteropentamer CHRNA3:CHRNB4 activity is blocked by the alpha-conotoxin ImI and AuIB. Functionally, component of neuronal acetylcholine receptors (nAChRs) that function as pentameric, ligand-gated cation channels with high calcium permeability among other activities. nAChRs are excitatory neurotrasnmitter receptors formed by a collection of nAChR subunits known to mediate synaptic transmission in the nervous system and the neuromuscular junction. Each nAchR subunit confers differential attributes to channel properties, including activation, deactivation and desensitization kinetics, pH sensitivity, cation permeability, and binding to allosteric modulators. CHRNA3 forms heteropentameric neuronal acetylcholine receptors with CHRNB2 and CHRNB4. CHRNA3:CHRNB4 being predominant in neurons of the autonomic ganglia, it is known as ganglionic nicotinic receptor. CHRNA3:CHRNB4 also plays an important role in the habenulo-interpeduncular tract, modulating the mesolimbic dopamine system and affecting reward circuits and addiction. Hypothalamic CHRNA3:CHRNB4 nAChR activation by nicotine leads to activation of POMC neurons and a decrease in food intake. Also expressed in the urothelium where it modulates reflex bladder activity by increasing intracellular calcium through extracellular influx and basal ATP release. The protein is Neuronal acetylcholine receptor subunit alpha-3 (CHRNA3) of Bos taurus (Bovine).